Consider the following 147-residue polypeptide: uncharacterized protein (147 aa).

The region spanning 50-140 is the Rhodanese domain; the sequence is NQKKAIIVDT…WNSENLPTTF (91 aa).

This is an uncharacterized protein from Buchnera aphidicola subsp. Schizaphis graminum (strain Sg).